The sequence spans 521 residues: (+)-kolavenyl diphosphate synthase (521 aa).

2 residues coordinate Mg(2+): Asp-311 and Asp-313. A DXDD motif motif is present at residues Asp-311–Asp-314.

Belongs to the terpene synthase family. Requires Mg(2+) as cofactor.

It catalyses the reaction (2E,6E,10E)-geranylgeranyl diphosphate = (+)-kolavenyl diphosphate. Its function is as follows. Involved in the biosynthesis of (+)-O-methylkolavelool. Catalyzes the conversion of geranylgeranyl diphosphate into (+)-kolavenyl diphosphate. This chain is (+)-kolavenyl diphosphate synthase, found in Herpetosiphon aurantiacus (strain ATCC 23779 / DSM 785 / 114-95).